Here is a 454-residue protein sequence, read N- to C-terminus: Bifunctional protein GlmU (454 aa).

The interval 1 to 228 is pyrophosphorylase; that stretch reads MSPLHVVILA…PFEVQGVNNR (228 aa). Residues 9–12, Lys-23, Gln-74, 79–80, 101–103, Gly-138, Glu-153, Asn-168, and Asn-226 each bind UDP-N-acetyl-alpha-D-glucosamine; these read LAAG, GT, and YGD. Residue Asp-103 participates in Mg(2+) binding. Asn-226 lines the Mg(2+) pocket. The linker stretch occupies residues 229–249; sequence LQLAELERWYQRQQAERLMTE. The interval 250 to 454 is N-acetyltransferase; the sequence is GASLADPARI…IAGWERPKKA (205 aa). UDP-N-acetyl-alpha-D-glucosamine is bound by residues Arg-332 and Lys-350. The active-site Proton acceptor is the His-362. The UDP-N-acetyl-alpha-D-glucosamine site is built by Tyr-365 and Asn-376. Residues Ala-379, 385 to 386, Ser-404, Ala-422, and Arg-439 each bind acetyl-CoA; that span reads NY.

In the N-terminal section; belongs to the N-acetylglucosamine-1-phosphate uridyltransferase family. This sequence in the C-terminal section; belongs to the transferase hexapeptide repeat family. In terms of assembly, homotrimer. Requires Mg(2+) as cofactor.

The protein localises to the cytoplasm. The enzyme catalyses alpha-D-glucosamine 1-phosphate + acetyl-CoA = N-acetyl-alpha-D-glucosamine 1-phosphate + CoA + H(+). The catalysed reaction is N-acetyl-alpha-D-glucosamine 1-phosphate + UTP + H(+) = UDP-N-acetyl-alpha-D-glucosamine + diphosphate. The protein operates within nucleotide-sugar biosynthesis; UDP-N-acetyl-alpha-D-glucosamine biosynthesis; N-acetyl-alpha-D-glucosamine 1-phosphate from alpha-D-glucosamine 6-phosphate (route II): step 2/2. Its pathway is nucleotide-sugar biosynthesis; UDP-N-acetyl-alpha-D-glucosamine biosynthesis; UDP-N-acetyl-alpha-D-glucosamine from N-acetyl-alpha-D-glucosamine 1-phosphate: step 1/1. It functions in the pathway bacterial outer membrane biogenesis; LPS lipid A biosynthesis. In terms of biological role, catalyzes the last two sequential reactions in the de novo biosynthetic pathway for UDP-N-acetylglucosamine (UDP-GlcNAc). The C-terminal domain catalyzes the transfer of acetyl group from acetyl coenzyme A to glucosamine-1-phosphate (GlcN-1-P) to produce N-acetylglucosamine-1-phosphate (GlcNAc-1-P), which is converted into UDP-GlcNAc by the transfer of uridine 5-monophosphate (from uridine 5-triphosphate), a reaction catalyzed by the N-terminal domain. The chain is Bifunctional protein GlmU from Marinobacter nauticus (strain ATCC 700491 / DSM 11845 / VT8) (Marinobacter aquaeolei).